The chain runs to 123 residues: Large ribosomal subunit protein bL19 (123 aa).

It belongs to the bacterial ribosomal protein bL19 family.

In terms of biological role, this protein is located at the 30S-50S ribosomal subunit interface and may play a role in the structure and function of the aminoacyl-tRNA binding site. The polypeptide is Large ribosomal subunit protein bL19 (Thermomicrobium roseum (strain ATCC 27502 / DSM 5159 / P-2)).